Consider the following 876-residue polypeptide: Alanine--tRNA ligase (876 aa).

Positions 565, 569, 667, and 671 each coordinate Zn(2+).

It belongs to the class-II aminoacyl-tRNA synthetase family. Requires Zn(2+) as cofactor.

The protein localises to the cytoplasm. It carries out the reaction tRNA(Ala) + L-alanine + ATP = L-alanyl-tRNA(Ala) + AMP + diphosphate. Catalyzes the attachment of alanine to tRNA(Ala) in a two-step reaction: alanine is first activated by ATP to form Ala-AMP and then transferred to the acceptor end of tRNA(Ala). Also edits incorrectly charged Ser-tRNA(Ala) and Gly-tRNA(Ala) via its editing domain. This chain is Alanine--tRNA ligase, found in Staphylococcus aureus (strain bovine RF122 / ET3-1).